The chain runs to 417 residues: Gamma-glutamyl phosphate reductase (417 aa).

The protein belongs to the gamma-glutamyl phosphate reductase family.

The protein resides in the cytoplasm. It catalyses the reaction L-glutamate 5-semialdehyde + phosphate + NADP(+) = L-glutamyl 5-phosphate + NADPH + H(+). It participates in amino-acid biosynthesis; L-proline biosynthesis; L-glutamate 5-semialdehyde from L-glutamate: step 2/2. Its function is as follows. Catalyzes the NADPH-dependent reduction of L-glutamate 5-phosphate into L-glutamate 5-semialdehyde and phosphate. The product spontaneously undergoes cyclization to form 1-pyrroline-5-carboxylate. The sequence is that of Gamma-glutamyl phosphate reductase from Enterobacter sp. (strain 638).